Here is a 446-residue protein sequence, read N- to C-terminus: Methylenetetrahydrofolate--tRNA-(uracil-5-)-methyltransferase TrmFO (446 aa).

Residue 9-14 participates in FAD binding; it reads GGGMAG.

It belongs to the MnmG family. TrmFO subfamily. Requires FAD as cofactor.

The protein resides in the cytoplasm. It carries out the reaction uridine(54) in tRNA + (6R)-5,10-methylene-5,6,7,8-tetrahydrofolate + NADH + H(+) = 5-methyluridine(54) in tRNA + (6S)-5,6,7,8-tetrahydrofolate + NAD(+). The catalysed reaction is uridine(54) in tRNA + (6R)-5,10-methylene-5,6,7,8-tetrahydrofolate + NADPH + H(+) = 5-methyluridine(54) in tRNA + (6S)-5,6,7,8-tetrahydrofolate + NADP(+). Catalyzes the folate-dependent formation of 5-methyl-uridine at position 54 (M-5-U54) in all tRNAs. The chain is Methylenetetrahydrofolate--tRNA-(uracil-5-)-methyltransferase TrmFO from Ruegeria sp. (strain TM1040) (Silicibacter sp.).